Here is a 550-residue protein sequence, read N- to C-terminus: CTP synthase (550 aa).

Positions 1-270 (MTKFVFVTGG…DRLICEELRL (270 aa)) are amidoligase domain. Ser13 contributes to the CTP binding site. Ser13 contacts UTP. ATP is bound by residues 14 to 19 (SLGKGI) and Asp71. 2 residues coordinate Mg(2+): Asp71 and Glu144. CTP-binding positions include 151-153 (DIE), 191-196 (KTKPTQ), and Lys227. Residues 191 to 196 (KTKPTQ) and Lys227 contribute to the UTP site. In terms of domain architecture, Glutamine amidotransferase type-1 spans 295–547 (TIGMVGKYVD…VEAALASQQR (253 aa)). Position 356 (Gly356) interacts with L-glutamine. The active-site Nucleophile; for glutamine hydrolysis is the Cys383. L-glutamine is bound by residues 384 to 387 (LGMQ), Glu407, and Arg473. Catalysis depends on residues His520 and Glu522.

Belongs to the CTP synthase family. In terms of assembly, homotetramer.

The enzyme catalyses UTP + L-glutamine + ATP + H2O = CTP + L-glutamate + ADP + phosphate + 2 H(+). It catalyses the reaction L-glutamine + H2O = L-glutamate + NH4(+). The catalysed reaction is UTP + NH4(+) + ATP = CTP + ADP + phosphate + 2 H(+). It participates in pyrimidine metabolism; CTP biosynthesis via de novo pathway; CTP from UDP: step 2/2. Its activity is regulated as follows. Allosterically activated by GTP, when glutamine is the substrate; GTP has no effect on the reaction when ammonia is the substrate. The allosteric effector GTP functions by stabilizing the protein conformation that binds the tetrahedral intermediate(s) formed during glutamine hydrolysis. Inhibited by the product CTP, via allosteric rather than competitive inhibition. In terms of biological role, catalyzes the ATP-dependent amination of UTP to CTP with either L-glutamine or ammonia as the source of nitrogen. Regulates intracellular CTP levels through interactions with the four ribonucleotide triphosphates. This Cupriavidus necator (strain ATCC 17699 / DSM 428 / KCTC 22496 / NCIMB 10442 / H16 / Stanier 337) (Ralstonia eutropha) protein is CTP synthase.